The chain runs to 590 residues: UvrABC system protein C (590 aa).

The region spanning 15-98 is the GIY-YIG domain; it reads AEPGVYQFVA…VKRHQPRYNV (84 aa). One can recognise a UVR domain in the interval 207–242; sequence GALADPLRREMAAAAQAEAFERAANLRDRLAVVEGF.

It belongs to the UvrC family. In terms of assembly, interacts with UvrB in an incision complex.

It localises to the cytoplasm. Its function is as follows. The UvrABC repair system catalyzes the recognition and processing of DNA lesions. UvrC both incises the 5' and 3' sides of the lesion. The N-terminal half is responsible for the 3' incision and the C-terminal half is responsible for the 5' incision. The polypeptide is UvrABC system protein C (Halobacterium salinarum (strain ATCC 29341 / DSM 671 / R1)).